We begin with the raw amino-acid sequence, 360 residues long: Ferredoxin--NADP reductase 1 (360 aa).

FAD is bound by residues D43, Q51, Y56, A96, F141, D307, and S348.

Belongs to the ferredoxin--NADP reductase type 2 family. Homodimer. FAD is required as a cofactor.

The catalysed reaction is 2 reduced [2Fe-2S]-[ferredoxin] + NADP(+) + H(+) = 2 oxidized [2Fe-2S]-[ferredoxin] + NADPH. In Cupriavidus taiwanensis (strain DSM 17343 / BCRC 17206 / CCUG 44338 / CIP 107171 / LMG 19424 / R1) (Ralstonia taiwanensis (strain LMG 19424)), this protein is Ferredoxin--NADP reductase 1.